Reading from the N-terminus, the 1297-residue chain is Phosphoribosylformylglycinamidine synthase (1297 aa).

The disordered stretch occupies residues 304-323 (PFPGAATGSGGEIRDEGATG). ATP is bound by residues 307 to 318 (GAATGSGGEIRD) and alanine 678. Residues aspartate 679, glutamate 718, asparagine 722, and aspartate 886 each contribute to the Mg(2+) site. Serine 888 contacts ATP. In terms of domain architecture, Glutamine amidotransferase type-1 spans 1043–1297 (RIAILREQGV…LFQNARVALG (255 aa)). Catalysis depends on cysteine 1137, which acts as the Nucleophile. Catalysis depends on residues histidine 1262 and glutamate 1264.

It in the N-terminal section; belongs to the FGAMS family. In terms of assembly, monomer.

Its subcellular location is the cytoplasm. It catalyses the reaction N(2)-formyl-N(1)-(5-phospho-beta-D-ribosyl)glycinamide + L-glutamine + ATP + H2O = 2-formamido-N(1)-(5-O-phospho-beta-D-ribosyl)acetamidine + L-glutamate + ADP + phosphate + H(+). It functions in the pathway purine metabolism; IMP biosynthesis via de novo pathway; 5-amino-1-(5-phospho-D-ribosyl)imidazole from N(2)-formyl-N(1)-(5-phospho-D-ribosyl)glycinamide: step 1/2. Phosphoribosylformylglycinamidine synthase involved in the purines biosynthetic pathway. Catalyzes the ATP-dependent conversion of formylglycinamide ribonucleotide (FGAR) and glutamine to yield formylglycinamidine ribonucleotide (FGAM) and glutamate. This chain is Phosphoribosylformylglycinamidine synthase, found in Histophilus somni (strain 129Pt) (Haemophilus somnus).